The chain runs to 527 residues: Protein PLASTID TRANSCRIPTIONALLY ACTIVE 12, chloroplastic (527 aa).

The transit peptide at 1–30 (MASISTTTWLYRGQVCTDSGKSSNCIVQRR) directs the protein to the chloroplast. Residues 1–115 (MASISTTTWL…ASIPGEDYWP (115 aa)) are PHYA-interacting region 1 (PIR1). The interval 89 to 188 (SYMDSTSGKL…NDSSDGFVTY (100 aa)) is disordered. Residues 163 to 181 (TNDEVSDSEDSSEEEENDS) are compositionally biased toward acidic residues. Short sequence motifs (nuclear localization signal) lie at residues 204–211 (DKKLGRPH) and 235–242 (WRKPEKEQ). Residues 252–352 (DVETVFLKAM…EMFSHQTDRE (101 aa)) are PHYA-interacting region 2 (PIR2). The span at 458–471 (GENDDDEDDADVEK) shows a compositional bias: acidic residues. The interval 458–527 (GENDDDEDDA…LMDFEEETDP (70 aa)) is disordered. The span at 485 to 504 (ETPELRTAKPKPKKEGRMSL) shows a compositional bias: basic and acidic residues. Acidic residues predominate over residues 506-527 (EAVDDAENLTDFLMDFEEETDP). Positions 512-520 (ENLTDFLMD) match the Required and sufficient for transcriptional transactivation activity and to trigger PIF proteins degradation motif.

As to quaternary structure, component of the transcriptionally active chromosome (TAC) complexes. Interacts with PTAC14 and PTAC7. Binds directly to PTAC6/PAP8 in the nucleus. Interacts with MED14. Binds to SL1/MTERF3. Binds to photoactivated phytochromes (e.g. PHYA and PHYB) via their photosensory domains; these interactions stimulate its light-mediated accumulation. Associates, via its N-terminal region, with phytochrome-interacting factors (PIFs) including PIF1, PIF3, PIF4, PIF5, PIF6, BHLH72/PIF7, UNE10/PIF8 and PIL1. Binds to RAD4. Associates with MRL7/RCB. Mostly expressed in cotyledons, leaves, stems and flowers, but barely in roots.

It localises to the plastid. Its subcellular location is the chloroplast. The protein resides in the nucleus. Its function is as follows. Involved in plastid gene expression. Acidic transcriptional coactivator necessary for the transactivation of many PIFs target genes (class B genes), particularly during the regulation of hypocotyl growth. Plays dual opposite roles in regulating hypocotyl growth, preventing it in red and far-red conditions, but promoting it otherwise. Required in the nucleus for the initiation of photomorphogenesis mediated by phytochromes (PHYs) (e.g. PHYA and PHYB) by mediating PHYs localization to photobodies, especially in response to red and far-red light, and implicating phytochrome nuclear bodies as sites of proteolysis for PHYs and PIFs proteins (e.g. PIF1 and PIF3). Acts downstream of PHYs and upstream of DET1. Involved in UV tolerance in both roots and hypocotyls, specifically in dark conditions. Element of a PIF4/HMR/MED14-dependent thermoresponsive process; acts as a PIF4 transcriptional coactivator to trigger the thermoresponsive growth-relevant genes (e.g. mainly involved in biosynthesis and signaling of the phytohormone auxin) and promote warm-temperature-dependent (e.g. 27 degrees Celsius) PIF4 and MED14 stabilization and accumulation, being more prominently involved in long days (LD) and continuous red light (Rc) than in short days (SD), thus modulating warm temperature elicitation of MED14-dependent thermomorphogenesis (e.g. hypocotyl elongation). This chain is Protein PLASTID TRANSCRIPTIONALLY ACTIVE 12, chloroplastic, found in Arabidopsis thaliana (Mouse-ear cress).